The primary structure comprises 92 residues: Protein S100-A12 (92 aa).

2 consecutive EF-hand domains span residues 13–48 (NIFHQYSVRVGHFDTLNKRELKQLITKELPKTLQNT) and 49–84 (KDQPTIDKIFQDLDADKDGAVSFEEFVVLVSRVLKT). Residue His16 participates in Cu cation binding. His16 is a Zn(2+) binding site. Ser19 and His24 together coordinate Ca(2+). Residue Asp26 participates in Cu cation binding. Position 26 (Asp26) interacts with Zn(2+). Ca(2+)-binding residues include Thr27 and Glu32. Positions 38–53 (TKELPKTLQNTKDQPT) are hinge domain. 4 residues coordinate Ca(2+): Asp62, Asp64, Asp66, and Glu73. Residues His86 and His90 each coordinate Cu cation. Zn(2+)-binding residues include His86 and His90.

It belongs to the S-100 family. As to quaternary structure, homodimer. Homooligomer (tetramer or hexamer) in the presence of calcium, zinc and copper ions. Interacts with AGER and both calcium and zinc are essential for the interaction. Interacts with CACYBP in a calcium-dependent manner. Up-regulated in stimulated inflammatory effector cells.

It is found in the secreted. It localises to the cytoplasm. The protein resides in the cytoskeleton. The protein localises to the cell membrane. In terms of biological role, S100A12 is a calcium-, zinc- and copper-binding protein which plays a prominent role in the regulation of inflammatory processes and immune response. Its pro-inflammatory activity involves recruitment of leukocytes, promotion of cytokine and chemokine production, and regulation of leukocyte adhesion and migration. Acts as an alarmin or a danger associated molecular pattern (DAMP) molecule and stimulates innate immune cells via binding to receptor for advanced glycation endproducts (AGER). Binding to AGER activates the MAP-kinase and NF-kappa-B signaling pathways leading to production of pro-inflammatory cytokines and up-regulation of cell adhesion molecules ICAM1 and VCAM1. Acts as a monocyte and mast cell chemoattractant. Can stimulate mast cell degranulation and activation which generates chemokines, histamine and cytokines inducing further leukocyte recruitment to the sites of inflammation. Can inhibit the activity of matrix metalloproteinases; MMP2, MMP3 and MMP9 by chelating Zn(2+) from their active sites. The sequence is that of Protein S100-A12 (S100A12) from Bos taurus (Bovine).